Consider the following 364-residue polypeptide: DNA replication and repair protein RecF (364 aa).

30–37 (GANGSGKT) contributes to the ATP binding site.

This sequence belongs to the RecF family.

The protein localises to the cytoplasm. In terms of biological role, the RecF protein is involved in DNA metabolism; it is required for DNA replication and normal SOS inducibility. RecF binds preferentially to single-stranded, linear DNA. It also seems to bind ATP. The sequence is that of DNA replication and repair protein RecF from Sodalis glossinidius.